Here is a 680-residue protein sequence, read N- to C-terminus: MMRVSQLQLCRTSLSYRLRSGYHHHHHLHHSFFKLIKRNSILESPPTNASHQSPSPITPMVNARVMFFSTSTSAPHPEKINRTSSENILRMISSYLWMKDNPKLCFRVISAFACLVGAKFLNVQVPFLFKVAIDWLSSSSFVDSNPYLVAAFATPSSVLIGYGIARSGSSAFNELRTSVFSKVALRTIRTISRKVLSRLHDLDLRYHLNRDTGALNRIIDRGSRAINTILSAMVFNIMPTILEISMVSCILAYKFGAVYALITCLSVGSYIAFTLAMTQWRIKIRKAMNEAENDASTRAIDSLINYETVKYFNNEDYEARKYDQLHENYEDAALQSRKSFALLNFGQSFIFSTALSTAMVLCSQGIMNGQMTVGDLVMVNGLLFQLSLPLYFLGVVYSDTVQGLVDMKSMFKFLEERSDIGDKDIDRKLPPLVLKGGSISFENVHFSYLPERKILDGISFEVPAGKSVAIVGSSGSGKSTILRMIFRFFDVDSGNVKIDGQDIKEVRLESLRSSIGVVPQDTVLFNDTIFHNIHYGNLSATEEEVYNAARRAAIHDTIMKFPDKYSTAVGERGLMLSGGEKQRVALARAFLKSPAILLCDEATSALDSKTEAEIMKTLRSLASNRTCIFIAHRLTTAMQCDEILVMEKGKVVEKGTHEVLLGKSGRYAKLWTQQNSKLEV.

Residues 1-75 (MMRVSQLQLC…MFFSTSTSAP (75 aa)) constitute a mitochondrion transit peptide. Residues 108–402 (VISAFACLVG…LGVVYSDTVQ (295 aa)) form the ABC transmembrane type-1 domain. 6 helical membrane-spanning segments follow: residues 109–129 (ISAF…PFLF), 145–165 (NPYL…YGIA), 232–252 (AMVF…CILA), 255–275 (FGAV…AFTL), 340–360 (FALL…TAMV), and 376–396 (LVMV…LGVV). The region spanning 439 to 673 (ISFENVHFSY…SGRYAKLWTQ (235 aa)) is the ABC transporter domain. Residues Tyr-448 and 472-483 (GSSGSGKSTILR) each bind ATP.

It belongs to the ABC transporter superfamily. ABCB family. Heavy Metal importer (TC 3.A.1.210) subfamily. Homodimer. In terms of tissue distribution, mostly expressed at low levels in roots and flowers.

Its subcellular location is the mitochondrion inner membrane. In terms of biological role, performs an essential function in the generation of cytoplasmic iron-sulfur proteins by mediating export of Fe/S cluster precursors synthesized by NFS1 and other mitochondrial proteins. Not involved in the export of cyclic pyranopterin monophosphate (cPMP) from mitochondria to the cytosol. This Arabidopsis thaliana (Mouse-ear cress) protein is ABC transporter B family member 24, mitochondrial (ABCB24).